The following is a 221-amino-acid chain: Oxaloacetate tautomerase FAHD1, mitochondrial (221 aa).

A mitochondrion-targeting transit peptide spans 1–24 (MAASRPLSRFWEWGKNIVCVGRNY). Residue arginine 22 coordinates oxalate. Serine 37 carries the post-translational modification Phosphoserine. Mg(2+) contacts are provided by glutamate 68, glutamate 70, and aspartate 99. The residue at position 110 (lysine 110) is an N6-acetyllysine. Lysine 112 bears the N6-succinyllysine mark. Oxalate-binding residues include lysine 120 and threonine 189.

It belongs to the FAH family. As to quaternary structure, homodimer. The cofactor is Mg(2+). Mn(2+) serves as cofactor. Ubiquitous (at protein level).

Its subcellular location is the mitochondrion. The protein resides in the cytoplasm. It is found in the cytosol. The enzyme catalyses oxaloacetate = enol-oxaloacetate. The catalysed reaction is oxaloacetate + H(+) = pyruvate + CO2. It carries out the reaction a 3-acylpyruvate + H2O = a carboxylate + pyruvate + H(+). It catalyses the reaction acetylpyruvate + H2O = acetate + pyruvate + H(+). The enzyme catalyses 3-fumarylpyruvate + H2O = fumarate + pyruvate + H(+). With respect to regulation, oxaloacetate decarboxylation is competitively inhibited by oxalate. Functionally, tautomerase that converts enol-oxaloacetate, a strong inhibitor of succinate dehydrogenase, to the physiological keto form of oxaloacetate. It is thereby required to maximize aerobic respiration efficiency by preventing succinate dehydrogenase inhibition. Also acts as a weak oxaloacetate decarboxylase (ODx), catalyzing the decarboxylation of oxaloacetate (OAA) to pyruvate and CO(2), and as such is likely a regulatory enzyme in the TCA cycle. Also displays acylpyruvase activity, being able to hydrolyze acetylpyruvate and fumarylpyruvate in vitro. Exhibits only a weak hydrolase activity on methylacetopyruvate and acetylacetone, and no activity toward acetoacetyl-CoA. This is Oxaloacetate tautomerase FAHD1, mitochondrial from Homo sapiens (Human).